Here is a 240-residue protein sequence, read N- to C-terminus: Peptidyl-tRNA hydrolase 2 (240 aa).

Y60 contributes to the tRNA binding site. H65 serves as the catalytic Proton acceptor. Residues Y111, N113, and N159 each contribute to the tRNA site.

The protein belongs to the PTH family. Monomer.

The protein resides in the cytoplasm. It carries out the reaction an N-acyl-L-alpha-aminoacyl-tRNA + H2O = an N-acyl-L-amino acid + a tRNA + H(+). In terms of biological role, hydrolyzes ribosome-free peptidyl-tRNAs (with 1 or more amino acids incorporated), which drop off the ribosome during protein synthesis, or as a result of ribosome stalling. Functionally, catalyzes the release of premature peptidyl moieties from peptidyl-tRNA molecules trapped in stalled 50S ribosomal subunits, and thus maintains levels of free tRNAs and 50S ribosomes. The protein is Peptidyl-tRNA hydrolase 2 of Corynebacterium jeikeium (strain K411).